The chain runs to 442 residues: Histidine--tRNA ligase (442 aa).

It belongs to the class-II aminoacyl-tRNA synthetase family. As to quaternary structure, homodimer.

Its subcellular location is the cytoplasm. It carries out the reaction tRNA(His) + L-histidine + ATP = L-histidyl-tRNA(His) + AMP + diphosphate + H(+). The sequence is that of Histidine--tRNA ligase from Wolinella succinogenes (strain ATCC 29543 / DSM 1740 / CCUG 13145 / JCM 31913 / LMG 7466 / NCTC 11488 / FDC 602W) (Vibrio succinogenes).